The following is a 216-amino-acid chain: Elongation factor Ts (216 aa).

Residues 81–84 (TDFV) are involved in Mg(2+) ion dislocation from EF-Tu.

The protein belongs to the EF-Ts family.

Its subcellular location is the cytoplasm. In terms of biological role, associates with the EF-Tu.GDP complex and induces the exchange of GDP to GTP. It remains bound to the aminoacyl-tRNA.EF-Tu.GTP complex up to the GTP hydrolysis stage on the ribosome. This is Elongation factor Ts from Geotalea daltonii (strain DSM 22248 / JCM 15807 / FRC-32) (Geobacter daltonii).